The primary structure comprises 653 residues: Hepatocyte growth factor activator serine protease (653 aa).

An N-terminal signal peptide occupies residues 1 to 34 (MGRQAWISSLCPLPRPCPFLLLLLLLVVPRGAQP). The disordered stretch occupies residues 34-98 (PQAGRNHTEP…SSSPPGGQVL (65 aa)). The propeptide at 35–369 (QAGRNHTEPP…RLTACESLAR (335 aa)) is removed in mature form. 3 N-linked (GlcNAc...) asparagine glycosylation sites follow: asparagine 39, asparagine 47, and asparagine 63. Low complexity predominate over residues 47–59 (NVTATPVTPTIPV). The region spanning 100–147 (ESGQPCRFPFRYGGRMLHSCTSEGSAYRKWCATTHNYDRDRAWGYCAE) is the Fibronectin type-II domain. 19 cysteine pairs are disulfide-bonded: cysteine 105/cysteine 130, cysteine 119/cysteine 145, cysteine 161/cysteine 172, cysteine 166/cysteine 183, cysteine 185/cysteine 194, cysteine 199/cysteine 227, cysteine 225/cysteine 234, cysteine 242/cysteine 253, cysteine 247/cysteine 264, cysteine 266/cysteine 275, cysteine 283/cysteine 364, cysteine 304/cysteine 346, cysteine 335/cysteine 359, cysteine 392/cysteine 519, cysteine 430/cysteine 446, cysteine 438/cysteine 508, cysteine 533/cysteine 602, cysteine 565/cysteine 581, and cysteine 592/cysteine 620. The 39-residue stretch at 157–195 (ILDPCASGPCLNGGTCSSTHDHGSYHCSCPLAFTGKDCG) folds into the EGF-like 1 domain. The region spanning 197–237 (EKCFDETRYEYFEVGDHWARVSEGHVEQCGCMEGQARCEDT) is the Fibronectin type-I domain. Positions 238-276 (HHTACLSSPCLNGGTCHLIVGTGTSVCTCPLGYAGRFCN) constitute an EGF-like 2 domain. The 82-residue stretch at 283–364 (CFLGNGTEYR…SWEYCRLTAC (82 aa)) folds into the Kringle domain. Asparagine 287 carries an N-linked (GlcNAc...) asparagine glycan. Residues 406-644 (IIGGSSSLPG…YVDWINDRIR (239 aa)) enclose the Peptidase S1 domain. The active-site Charge relay system is the histidine 445. N-linked (GlcNAc...) asparagine glycosylation occurs at asparagine 466. The Charge relay system role is filled by aspartate 495. Asparagine 544 carries N-linked (GlcNAc...) asparagine glycosylation. The Charge relay system role is filled by serine 596.

Belongs to the peptidase S1 family. In terms of assembly, heterodimer of a short chain and a long chain linked by a disulfide bond. Post-translationally, the active form of HGFAC presents in the serum is derived from the COOH-terminal region of the precursor by the cleavage of bonds between Arg-369 and Val-370 and Arg-405 and Ile-406.

The protein localises to the secreted. Serine protease that hydrolyzes the inactive zymogen hepatocyte growth factor (HGFsc) to an activated disulfide-linked heterodimer, then initiating hepatocyte growth factor receptor signaling pathway. The protein is Hepatocyte growth factor activator serine protease of Mus musculus (Mouse).